Consider the following 207-residue polypeptide: Ras-related protein Rab-8A (207 aa).

Residues Ser-17, Gly-18, Val-19, Gly-20, Lys-21, Thr-22, Cys-23, Ser-35, Ser-39, and Thr-40 each coordinate GTP. Thr-22 is a Mg(2+) binding site. Short sequence motifs (switch) lie at residues 31–45 (DAFN…GIDF) and 63–80 (DTAG…YYRG). Residues Thr-40 and Asp-63 each contribute to the Mg(2+) site. Gly-66 contributes to the GTP binding site. Thr-72 carries the post-translational modification Phosphothreonine. The GTP site is built by Asn-121, Lys-122, Asp-124, Ala-152, and Lys-153. Phosphoserine occurs at positions 181 and 185. Cys-204 is subject to Cysteine methyl ester. A lipid anchor (S-geranylgeranyl cysteine) is attached at Cys-204. The propeptide at 205 to 207 (VLL) is removed in mature form.

It belongs to the small GTPase superfamily. Rab family. As to quaternary structure, interacts (GTP-bound form) with MICALL1; regulates RAB8A association with recycling endosomes. Interacts with MICALL2; competes with RAB13 and is involved in E-cadherin endocytic recycling. Interacts (GTP-bound form) with MICAL1, MICALCL, MICAL3, EHBP1 and EHBP1L1; at least in case of MICAL1, MICALCL, MICAL3 and EHBP1L1 two molecules of RAB8A can bind to one molecule of the effector protein; ternary complexes of RAB8A, RAB13 and either MICAL1 or EHBP1L1 are possible. Interacts with EHD1. Interacts with MAP4K2 and SYTL4. Interacts with SGSM1 and SGSM3. Interacts with RABIF, RIMS2, RPH3A and RPH3A. Interacts with OPTN. Interacts with RAB3IP, RAB3IP functions as guanine exchange factor (GEF). Interacts with MYO5B. Interacts with CIMAP3. Interacts with BIRC6/bruce. Interacts with OCRL. Interacts with AHI1. Interacts with DCDC1. Interacts with LRRK2; interaction facilitates phosphorylation of Thr-72. Interacts with RAB31P, GDI1, GDI2, CHM, CHML, RABGGTA, RABGGTB, TBC1D15 and INPP5B; these interactions are dependent on Thr-72 not being phosphorylated. Interacts with RILPL1 and RILPL2; these interactions are dependent on the phosphorylation of Thr-72 by LRRK2. Interacts with DZIP1; prevents inhibition by the GDP-dissociation inhibitor GDI2. Interacts (in GDP-bound form) with RAB3IP/Rabin8, RAB3IP functions as guanine exchange factor (GEF) towards RAB8A. Interacts (in GDP-bound form) with RPGR, RPGR functions as GEF towards RAB8A. The cofactor is Mg(2+). In terms of processing, phosphorylation of Thr-72 in the switch II region by LRRK2 prevents the association of RAB regulatory proteins, including CHM, CHML and RAB GDP dissociation inhibitors GDI1 and GDI2. Phosphorylation by LRRK2 is required for localization to stressed lysosomes.

It is found in the cell membrane. Its subcellular location is the golgi apparatus. The protein resides in the endosome membrane. It localises to the recycling endosome membrane. The protein localises to the cell projection. It is found in the cilium. Its subcellular location is the cytoplasmic vesicle. The protein resides in the phagosome membrane. It localises to the cytoplasm. The protein localises to the cytoskeleton. It is found in the microtubule organizing center. Its subcellular location is the centrosome. The protein resides in the centriole. It localises to the cilium basal body. The protein localises to the midbody. It is found in the lysosome. The enzyme catalyses GTP + H2O = GDP + phosphate + H(+). Regulated by guanine nucleotide exchange factors (GEFs) such as RAB3IP/Rabin8 and RPGR which promote the exchange of bound GDP for free GTP, GTPase activating proteins (GAPs) which increase the GTP hydrolysis activity, and GDP dissociation inhibitors (GDIs) which inhibit the dissociation of the nucleotide from the GTPase. Activated in response to insulin. Functionally, the small GTPases Rab are key regulators of intracellular membrane trafficking, from the formation of transport vesicles to their fusion with membranes. Rabs cycle between an inactive GDP-bound form and an active GTP-bound form that is able to recruit to membranes different sets of downstream effectors directly responsible for vesicle formation, movement, tethering and fusion. RAB8A is involved in polarized vesicular trafficking and neurotransmitter release. Together with RAB11A, RAB3IP, the exocyst complex, PARD3, PRKCI, ANXA2, CDC42 and DNMBP promotes transcytosis of PODXL to the apical membrane initiation sites (AMIS), apical surface formation and lumenogenesis. Regulates the compacted morphology of the Golgi. Together with MYO5B and RAB11A participates in epithelial cell polarization. Also involved in membrane trafficking to the cilium and ciliogenesis. Together with MICALL2, may also regulate adherens junction assembly. May play a role in insulin-induced transport to the plasma membrane of the glucose transporter GLUT4 and therefore play a role in glucose homeostasis. Involved in autophagy. Participates in the export of a subset of neosynthesized proteins through a Rab8-Rab10-Rab11-dependent endososomal export route. Targeted to and stabilized on stressed lysosomes through LRRK2 phosphorylation. Suppresses stress-induced lysosomal enlargement through EHBP1 and EHNP1L1 effector proteins. This Bos taurus (Bovine) protein is Ras-related protein Rab-8A (RAB8A).